The primary structure comprises 70 residues: Myotoxin (70 aa).

The signal sequence occupies residues methionine 1–alanine 22. 3 disulfides stabilise this stretch: cysteine 26–cysteine 58, cysteine 33–cysteine 52, and cysteine 40–cysteine 59.

It belongs to the crotamine-myotoxin family. In terms of assembly, monomer. In terms of tissue distribution, expressed by the venom gland.

It is found in the secreted. Functionally, cationic peptide that possesses multiple functions. It acts as a cell-penetrating peptide (CPP), and as a potent voltage-gated potassium channel (Kv) inhibitor. It exhibits antimicrobial activities, hind limb paralysis, and severe muscle necrosis by a non-enzymatic mechanism. In Crotalus helleri (Southern pacific rattlesnake), this protein is Myotoxin.